Reading from the N-terminus, the 501-residue chain is Cell division control protein 24 (501 aa).

As to quaternary structure, interacts with dna2, pcn1 and rfc1.

The protein localises to the nucleus. Its subcellular location is the cytoplasm. Has a role in the progression of DNA replication and in the maintenance of genomic integrity. Acts during S phase, after initiation, where it is essential for completion. The sequence is that of Cell division control protein 24 (cdc24) from Schizosaccharomyces pombe (strain 972 / ATCC 24843) (Fission yeast).